We begin with the raw amino-acid sequence, 1054 residues long: Kinesin-like protein KIN-7G (1054 aa).

Positions Lys-17–Val-341 constitute a Kinesin motor domain. ATP is bound at residue Gly-105–Thr-112. Coiled coils occupy residues Val-350–Ala-425 and Thr-611–Val-640. 2 disordered regions span residues Cys-600–Ser-648 and Glu-740–Ile-760. Residues Thr-613–Glu-631 are compositionally biased toward acidic residues.

The protein belongs to the TRAFAC class myosin-kinesin ATPase superfamily. Kinesin family. KIN-7 subfamily.

This is Kinesin-like protein KIN-7G from Arabidopsis thaliana (Mouse-ear cress).